The following is an 808-amino-acid chain: Bifunctional uridylyltransferase/uridylyl-removing enzyme (808 aa).

Residues 1–315 (MEAESPCAAS…ALVRRPKRRP (315 aa)) form a uridylyltransferase region. The segment at 316–609 (LDEGVVEYAG…EISPRDGERI (294 aa)) is uridylyl-removing. The region spanning 430 to 544 (VDRHVVETAV…LEVLHALSEA (115 aa)) is the HD domain. ACT domains follow at residues 610-686 (DAVI…GMLQ) and 730-805 (ILEV…VDEP).

This sequence belongs to the GlnD family. Mg(2+) is required as a cofactor.

The catalysed reaction is [protein-PII]-L-tyrosine + UTP = [protein-PII]-uridylyl-L-tyrosine + diphosphate. The enzyme catalyses [protein-PII]-uridylyl-L-tyrosine + H2O = [protein-PII]-L-tyrosine + UMP + H(+). In terms of biological role, modifies, by uridylylation and deuridylylation, the PII regulatory protein (GlnB), in response to the nitrogen status of the cell that GlnD senses through the glutamine level. Under low glutamine levels, catalyzes the conversion of the PII protein and UTP to PII-UMP and PPi, while under higher glutamine levels, GlnD hydrolyzes PII-UMP to PII and UMP (deuridylylation). Thus, controls uridylylation state and activity of the PII protein, and plays an important role in the regulation of nitrogen assimilation and metabolism. The sequence is that of Bifunctional uridylyltransferase/uridylyl-removing enzyme from Mycobacterium tuberculosis (strain CDC 1551 / Oshkosh).